A 368-amino-acid polypeptide reads, in one-letter code: tRNA-specific 2-thiouridylase MnmA (368 aa).

ATP-binding positions include 11 to 18 (GMSGGVDS) and Met-37. The tract at residues 97–99 (NPD) is interaction with target base in tRNA. The active-site Nucleophile is Cys-102. Residues Cys-102 and Cys-199 are joined by a disulfide bond. Residue Gly-127 coordinates ATP. The interval 149–151 (KDQ) is interaction with tRNA. The active-site Cysteine persulfide intermediate is the Cys-199. The segment at 311 to 312 (RY) is interaction with tRNA.

It belongs to the MnmA/TRMU family. Interacts with TusE.

It localises to the cytoplasm. The enzyme catalyses S-sulfanyl-L-cysteinyl-[protein] + uridine(34) in tRNA + AH2 + ATP = 2-thiouridine(34) in tRNA + L-cysteinyl-[protein] + A + AMP + diphosphate + H(+). Catalyzes the 2-thiolation of uridine at the wobble position (U34) of tRNA(Lys), tRNA(Glu) and tRNA(Gln), leading to the formation of s(2)U34, the first step of tRNA-mnm(5)s(2)U34 synthesis. Sulfur is provided by IscS, via a sulfur-relay system. Binds ATP and its substrate tRNAs. This is tRNA-specific 2-thiouridylase MnmA from Shigella flexneri serotype 5b (strain 8401).